The primary structure comprises 535 residues: Lecithin-cholesterol acyltransferase-like 4 (535 aa).

The residue at position 2 (Ser-2) is an N-acetylserine. Ser-182 (acyl-ester intermediate) is an active-site residue. Catalysis depends on charge relay system residues Asp-391 and His-416. The segment covering 488-505 (STVNSISVSQPGDDQNPQ) has biased composition (polar residues). Residues 488 to 507 (STVNSISVSQPGDDQNPQAE) are disordered.

It belongs to the AB hydrolase superfamily. Lipase family.

This chain is Lecithin-cholesterol acyltransferase-like 4 (LCAT4), found in Arabidopsis thaliana (Mouse-ear cress).